A 427-amino-acid polypeptide reads, in one-letter code: UPF0761 membrane protein Plut_1323 (427 aa).

6 helical membrane passes run 51–71, 105–125, 147–167, 188–208, 221–241, and 251–271; these read LLSI…FAVF, TFTM…VLIS, FTLY…SLAA, LLSL…YLLV, GALV…FYVA, and GALS…VVVL.

Belongs to the UPF0761 family.

The protein resides in the cell inner membrane. This Chlorobium luteolum (strain DSM 273 / BCRC 81028 / 2530) (Pelodictyon luteolum) protein is UPF0761 membrane protein Plut_1323.